The sequence spans 485 residues: NADH-quinone oxidoreductase subunit N (485 aa).

14 consecutive transmembrane segments (helical) span residues 8 to 28 (LIAL…MLSI), 35 to 55 (FLNA…LWFV), 71 to 91 (GFAM…CTFA), 105 to 125 (FYLL…ANHL), 127 to 147 (SLFL…GYAF), 159 to 179 (YTIL…LVYA), 203 to 223 (LLAG…LVPF), 235 to 255 (PAPV…GVVM), 271 to 291 (VVLA…ALSQ), 297 to 317 (LLGY…IALQ), 326 to 346 (VGVY…VVSL), 373 to 393 (AAVM…LGFI), 408 to 430 (WWLV…RVAV), and 450 to 470 (YSAG…LGVW).

Belongs to the complex I subunit 2 family. In terms of assembly, NDH-1 is composed of 13 different subunits. Subunits NuoA, H, J, K, L, M, N constitute the membrane sector of the complex.

Its subcellular location is the cell inner membrane. It catalyses the reaction a quinone + NADH + 5 H(+)(in) = a quinol + NAD(+) + 4 H(+)(out). Its function is as follows. NDH-1 shuttles electrons from NADH, via FMN and iron-sulfur (Fe-S) centers, to quinones in the respiratory chain. The immediate electron acceptor for the enzyme in this species is believed to be ubiquinone. Couples the redox reaction to proton translocation (for every two electrons transferred, four hydrogen ions are translocated across the cytoplasmic membrane), and thus conserves the redox energy in a proton gradient. This Shigella boydii serotype 4 (strain Sb227) protein is NADH-quinone oxidoreductase subunit N.